Consider the following 468-residue polypeptide: Argininosuccinate lyase (468 aa).

It belongs to the lyase 1 family. Argininosuccinate lyase subfamily.

The protein localises to the cytoplasm. The enzyme catalyses 2-(N(omega)-L-arginino)succinate = fumarate + L-arginine. The protein operates within amino-acid biosynthesis; L-arginine biosynthesis; L-arginine from L-ornithine and carbamoyl phosphate: step 3/3. This chain is Argininosuccinate lyase, found in Methanothermobacter thermautotrophicus (strain ATCC 29096 / DSM 1053 / JCM 10044 / NBRC 100330 / Delta H) (Methanobacterium thermoautotrophicum).